The primary structure comprises 433 residues: Enolase (433 aa).

Gln167 serves as a coordination point for (2R)-2-phosphoglycerate. The Proton donor role is filled by Glu209. Mg(2+) contacts are provided by Asp246, Glu287, and Asp314. (2R)-2-phosphoglycerate is bound by residues Lys339, Arg368, Ser369, and Lys390. Residue Lys339 is the Proton acceptor of the active site.

Belongs to the enolase family. It depends on Mg(2+) as a cofactor.

It localises to the cytoplasm. The protein localises to the secreted. The protein resides in the cell surface. It catalyses the reaction (2R)-2-phosphoglycerate = phosphoenolpyruvate + H2O. It functions in the pathway carbohydrate degradation; glycolysis; pyruvate from D-glyceraldehyde 3-phosphate: step 4/5. Functionally, catalyzes the reversible conversion of 2-phosphoglycerate (2-PG) into phosphoenolpyruvate (PEP). It is essential for the degradation of carbohydrates via glycolysis. This chain is Enolase, found in Prochlorococcus marinus (strain NATL2A).